A 415-amino-acid chain; its full sequence is Multidrug resistance protein MdtA (415 aa).

The N-terminal stretch at 1–21 (MKGSYKSRWVIVIVVVIAAIA) is a signal peptide. Residues 31 to 47 (DSQSAAPGATKQAQQSP) show a composition bias toward polar residues. 2 disordered regions span residues 31-60 (DSQS…GPLA) and 392-415 (EAQS…GARS). Residues 399–415 (PEEKATSREYAKKGARS) show a composition bias toward basic and acidic residues.

It belongs to the membrane fusion protein (MFP) (TC 8.A.1) family. As to quaternary structure, part of a tripartite efflux system composed of MdtA, MdtB and MdtC.

The protein localises to the cell inner membrane. Functionally, the MdtABC tripartite complex confers resistance against novobiocin and deoxycholate. The chain is Multidrug resistance protein MdtA from Escherichia coli O157:H7.